A 106-amino-acid polypeptide reads, in one-letter code: Small ribosomal subunit protein bS18 (106 aa).

Residues 1–32 are disordered; the sequence is MRWMKIMSEDMKQEQSGEGRGGRGGPARPLAS. Positions 7-21 are enriched in basic and acidic residues; sequence MSEDMKQEQSGEGRG.

It belongs to the bacterial ribosomal protein bS18 family. As to quaternary structure, part of the 30S ribosomal subunit. Forms a tight heterodimer with protein bS6.

Binds as a heterodimer with protein bS6 to the central domain of the 16S rRNA, where it helps stabilize the platform of the 30S subunit. The protein is Small ribosomal subunit protein bS18 of Magnetococcus marinus (strain ATCC BAA-1437 / JCM 17883 / MC-1).